The chain runs to 614 residues: MCGIVGYIGKRKAYPILIKGLKRLEYRGYDSAGVALISDNQQLNVYKTKGKVSELENFVTQKDISGTVGIAHTRWATHGEPCSVNAHPHYSSSEKLALIHNGIIENYAVLKEKLQAKGYVFKSSTDTEVLVQLIEYMKVTNRVDLLTAVQLALNEVIGAYAIAILDKEHPEEIIAARKSSPLVVGIGEDEFFLASDATPIVEYTDKVVYLEDGEIAVINRGKELKVVDLSNVEMTPEVKKVELKLGQLEKGGYPHFMLKEIFEQPDCIHDCMRGRINVEANNVVLSAVIDYKEKLLNAKRFIIVACGTSWHAGLIGKHLIESFCRIPVEVEYASEFRYRDPVIDEHDVVIAISQSGETADTLAAVELAKSRGAFIYGICNAIGSSIPRATHTGSYIHVGPEIGVASTKAFTGQVTVLTMLALTLAREKGTIDETQYLNIVRELNSIPGKMKEVLKLNDKLAELSKTFTYAHNFIYLGRGYSYPVALEGALKLKEISYIHAEGYPAAEMKHGPIALIDAEMPVVVIATQNGLYEKVLSNIQEIKARKGKVIAFVTKGDTVISKIADCSIELPETIECLDPLITTVPLQLLAYHIAVCKGMDVDQPRNLAKSVTVE.

Cysteine 2 acts as the Nucleophile; for GATase activity in catalysis. The 220-residue stretch at 2 to 221 folds into the Glutamine amidotransferase type-2 domain; the sequence is CGIVGYIGKR…DGEIAVINRG (220 aa). SIS domains are found at residues 291–430 and 463–604; these read YKEK…EKGT and LSKT…VDQP. Lysine 609 functions as the For Fru-6P isomerization activity in the catalytic mechanism.

In terms of assembly, homodimer.

The protein localises to the cytoplasm. It carries out the reaction D-fructose 6-phosphate + L-glutamine = D-glucosamine 6-phosphate + L-glutamate. In terms of biological role, catalyzes the first step in hexosamine metabolism, converting fructose-6P into glucosamine-6P using glutamine as a nitrogen source. This is Glutamine--fructose-6-phosphate aminotransferase [isomerizing] from Bacteroides thetaiotaomicron (strain ATCC 29148 / DSM 2079 / JCM 5827 / CCUG 10774 / NCTC 10582 / VPI-5482 / E50).